The sequence spans 156 residues: SCP2 sterol-binding domain-containing protein 1 (156 aa).

The region spanning 44–156 is the SCP2 domain; sequence NFSVFEDISQ…ERIFREWAKI (113 aa).

The protein is SCP2 sterol-binding domain-containing protein 1 (Scp2d1) of Mus musculus (Mouse).